The primary structure comprises 243 residues: Chromosome partition protein MukE (243 aa).

Residues 223–243 form a disordered region; the sequence is LMENDTKSADEIDEEFDGEQE. Over residues 233–243 the composition is skewed to acidic residues; that stretch reads EIDEEFDGEQE.

This sequence belongs to the MukE family. As to quaternary structure, interacts, and probably forms a ternary complex, with MukF and MukB. The complex formation is stimulated by calcium or magnesium.

Its subcellular location is the cytoplasm. The protein resides in the nucleoid. Functionally, involved in chromosome condensation, segregation and cell cycle progression. May participate in facilitating chromosome segregation by condensation DNA from both sides of a centrally located replisome during cell division. Probably acts via its interaction with MukB and MukF. This Haemophilus influenzae (strain ATCC 51907 / DSM 11121 / KW20 / Rd) protein is Chromosome partition protein MukE.